The primary structure comprises 378 residues: Protein-glutamate methylesterase/protein-glutamine glutaminase 2 (378 aa).

Residues 4–121 form the Response regulatory domain; the sequence is KVLVVDDSGF…SRNPEKVKQL (118 aa). Residue D55 is modified to 4-aspartylphosphate. The disordered stretch occupies residues 141–188; sequence APAPAAAPTPAPIPAAAPSSFGSHSAPARPAPAPAPTRAPAASASSPA. A compositionally biased stretch (pro residues) spans 145–155; that stretch reads AAAPTPAPIPA. Low complexity-rich tracts occupy residues 156–168 and 178–188; these read AAPS…SAPA and RAPAASASSPA. A CheB-type methylesterase domain is found at 187-378; the sequence is PAPKRKNYKL…IGKHIVEACV (192 aa). Residues S202, H229, and D322 contribute to the active site.

Belongs to the CheB family. Post-translationally, phosphorylated by CheA. Phosphorylation of the N-terminal regulatory domain activates the methylesterase activity.

It localises to the cytoplasm. It catalyses the reaction [protein]-L-glutamate 5-O-methyl ester + H2O = L-glutamyl-[protein] + methanol + H(+). It carries out the reaction L-glutaminyl-[protein] + H2O = L-glutamyl-[protein] + NH4(+). Functionally, involved in chemotaxis. Part of a chemotaxis signal transduction system that modulates chemotaxis in response to various stimuli. Catalyzes the demethylation of specific methylglutamate residues introduced into the chemoreceptors (methyl-accepting chemotaxis proteins or MCP) by CheR. Also mediates the irreversible deamidation of specific glutamine residues to glutamic acid. The polypeptide is Protein-glutamate methylesterase/protein-glutamine glutaminase 2 (Pseudomonas fluorescens (strain Pf0-1)).